The following is a 409-amino-acid chain: MVLAAIPSPSRGVVHLGPVPLRAYALMIIIGVFVAVFVTGRRLRARGMDPMVASEVAYWAVPFGIVGARVYHVVSTPAAYFGRDGNVLDVIKIWNGGLGIWGAIAGGAFGAWLATRRYGISLALFGDAAAPGIILAQAIGRWGNWFNQELYGKASTLPWAVRIDEKHQIIPGVSTYQPTFLYECLWNLVVAGILLVVDRRHRLGRGKLFCLYVALYTFGRLWIEMLRIDTANQILGLRVNIWTSIVVCLGALLALAVTRSPVDPNLSREEQEALGIARSRPAARSTVTTAGTADQRAAAPDSAGPDSAALDSVGPDSVDPDLGGPDPADPGSAGSVPAAAVPDASGSTATTATTATTATTATTATTATTATTATTGVPAGSQQSRGLATRLPASGGHTSAVPPEEPQLP.

Helical transmembrane passes span 18–38 (PVPLRAYALMIIIGVFVAVFV), 48–68 (MDPMVASEVAYWAVPFGIVGA), 93–113 (IWNGGLGIWGAIAGGAFGAWL), and 119–139 (GISLALFGDAAAPGIILAQAI). Arg-141 provides a ligand contact to a 1,2-diacyl-sn-glycero-3-phospho-(1'-sn-glycerol). Helical transmembrane passes span 177-197 (QPTFLYECLWNLVVAGILLVV) and 234-254 (ILGLRVNIWTSIVVCLGALLA). A disordered region spans residues 273–409 (ALGIARSRPA…AVPPEEPQLP (137 aa)). Composition is skewed to low complexity over residues 297–309 (AAAPDSAGPDSAA), 320–335 (PDLGGPDPADPGSAGS), and 348–375 (TATTATTATTATTATTATTATTATTATT).

This sequence belongs to the Lgt family.

The protein resides in the cell membrane. It catalyses the reaction L-cysteinyl-[prolipoprotein] + a 1,2-diacyl-sn-glycero-3-phospho-(1'-sn-glycerol) = an S-1,2-diacyl-sn-glyceryl-L-cysteinyl-[prolipoprotein] + sn-glycerol 1-phosphate + H(+). Its pathway is protein modification; lipoprotein biosynthesis (diacylglyceryl transfer). Catalyzes the transfer of the diacylglyceryl group from phosphatidylglycerol to the sulfhydryl group of the N-terminal cysteine of a prolipoprotein, the first step in the formation of mature lipoproteins. This chain is Phosphatidylglycerol--prolipoprotein diacylglyceryl transferase, found in Frankia casuarinae (strain DSM 45818 / CECT 9043 / HFP020203 / CcI3).